The following is a 117-amino-acid chain: Anti-sigma F factor antagonist (117 aa).

The STAS domain occupies 3 to 113 (LQIEMEHHRG…DNEVNALTEL (111 aa)). Serine 58 is subject to Phosphoserine.

The protein belongs to the anti-sigma-factor antagonist family. Phosphorylated by SpoIIAB on a serine residue.

Its function is as follows. In the phosphorylated form it could act as an anti-anti-sigma factor that counteracts SpoIIAB and thus releases sigma f from inhibition. This chain is Anti-sigma F factor antagonist (spoIIAA), found in Paenibacillus polymyxa (Bacillus polymyxa).